Consider the following 258-residue polypeptide: Rho-related GTP-binding protein RhoU (258 aa).

The interval 1–45 (MPPQQGDPAFPDRCEAPPVPPRRERGGRGGRGPGEPGGRGRAGGA) is disordered. A compositionally biased stretch (basic and acidic residues) spans 10–27 (FPDRCEAPPVPPRRERGG). Residues 29–45 (GGRGPGEPGGRGRAGGA) are compositionally biased toward gly residues. Residues 56–63 (GDGAVGKT), 103–107 (DTAGQ), and 161–164 (TQSD) contribute to the GTP site. Residues lysine 177 and lysine 248 each participate in a glycyl lysine isopeptide (Lys-Gly) (interchain with G-Cter in ubiquitin) cross-link. A lipid anchor (S-palmitoyl cysteine) is attached at cysteine 256.

The protein belongs to the small GTPase superfamily. Rho family. As to quaternary structure, interacts with PAK1. Interacts with PAK3. Interacts with ARHGAP30 in a GTP-independent manner. In its GTP-loaded conformation, interacts with ARHGAP31. Interacts with PTK2B/PYK2. Interacts with PAK4; the interaction is PAK4 kinase activity-independent and protects RHOU from ubiquitination. The cofactor is Mg(2+). Post-translationally, ubiquitinated. 'Lys-48'-linked ubiquitination at Lys-177 and Lys-248 by the ECS(RAB40A) complex leading to its degradation. In terms of processing, tyrosine phosphorylated by SRC in response to PTK2B/PYK2 activation. Ubiquitously expressed in all tissues examined. Expressed at high levels in the stomach, small intestine, brain, skeletal muscle and placenta.

It is found in the cell membrane. It localises to the golgi apparatus membrane. The protein resides in the cell junction. The protein localises to the focal adhesion. Its subcellular location is the cell projection. It is found in the podosome. Binds to and activates protein kinase PAK1. Plays a role in the regulation of cell morphology, cytoskeletal organization and focal adhesion assembly during cell migration. Also stimulates quiescent cells to reenter the cell cycle. Has no detectable GTPase activity but its high intrinsic guanine nucleotide exchange activity suggests it is constitutively GTP-bound. This Homo sapiens (Human) protein is Rho-related GTP-binding protein RhoU.